The primary structure comprises 159 residues: Cyclic pyranopterin monophosphate synthase (159 aa).

Substrate is bound by residues 75 to 77 and 113 to 114; these read LCH and ME. Residue Asp128 is part of the active site.

Belongs to the MoaC family. Homohexamer; trimer of dimers.

It carries out the reaction (8S)-3',8-cyclo-7,8-dihydroguanosine 5'-triphosphate = cyclic pyranopterin phosphate + diphosphate. It functions in the pathway cofactor biosynthesis; molybdopterin biosynthesis. Catalyzes the conversion of (8S)-3',8-cyclo-7,8-dihydroguanosine 5'-triphosphate to cyclic pyranopterin monophosphate (cPMP). In Yersinia pseudotuberculosis serotype O:1b (strain IP 31758), this protein is Cyclic pyranopterin monophosphate synthase.